The sequence spans 38 residues: Large ribosomal subunit protein bL36 (38 aa).

It belongs to the bacterial ribosomal protein bL36 family.

The chain is Large ribosomal subunit protein bL36 from Polynucleobacter necessarius subsp. necessarius (strain STIR1).